A 334-amino-acid chain; its full sequence is Mitochondrial glycine transporter (334 aa).

Solcar repeat units follow at residues 10–94 (SKSS…IRQA), 127–211 (LSNT…FKRR), and 234–318 (RAAA…LIMR). 6 helical membrane-spanning segments follow: residues 16–41 (FVAGLGSGVLSAALLQPIDLLKTRVQ), 69–95 (GTVPSALRTGFGSALYFSTLNAIRQAA), 133–158 (LLAGGVARGFAGFVLMPLTVIKVRYE), 186–209 (GFGATALRDAPYAGLYVLLYEQFK), 238–264 (VNFSSGVLAAVACSVVSNPFDAVKTRI), and 293–311 (GLGLRMSRKALSSALAWTL).

It belongs to the mitochondrial carrier (TC 2.A.29) family. SLC25A38 subfamily.

Its subcellular location is the mitochondrion inner membrane. It carries out the reaction glycine(in) = glycine(out). Its function is as follows. Mitochondrial glycine transporter that imports glycine into the mitochondrial matrix. Plays an important role in providing glycine for the first enzymatic step in heme biosynthesis, the condensation of glycine with succinyl-CoA to produce 5-aminolevulinate (ALA) in the mitochondrial matrix. The chain is Mitochondrial glycine transporter from Pyricularia oryzae (strain 70-15 / ATCC MYA-4617 / FGSC 8958) (Rice blast fungus).